A 444-amino-acid chain; its full sequence is MTSGVSGSSSQDPTLAAQLAQSSQKAGNAQSGHDTKNVTKQGAQAEVAAGGFEDLIQDASAQSTGKKEATSSTTKSSKGEKSEKSGKSKSSTSVASASETATAQAVQGPKGLRQNNYDSPSLPTPEAQTINGIVLKKGMGTLALLGLVMTLMANAAGESWKASFQSQNQAIRSQVESAPAIGEAIKRQANHQASATEAQAKQSLISGIVNIVGFTVSVGAGIFSAAKGATSALKSASFAKETGASAAGGAASKALTSASSSVQQTMASTAKAATTAASSAGSAATKAAANLTDDMAAAASKMASDGASKASGGLFGEVLNKPNWSEKVSRGMNVVKTQGARVASFAGNALSSSMQMSQLMHGLTAAVEGLSAGQTGIEVAHHQRLAGQAEAQAEVLKQMSSVYGQQAGQAGQLQEQAMQSFNTALQTLQNIADSQTQTTSAIFN.

The segment covering 1 to 13 (MTSGVSGSSSQDP) has biased composition (polar residues). The tract at residues 1–124 (MTSGVSGSSS…NNYDSPSLPT (124 aa)) is disordered. A compositionally biased stretch (low complexity) spans 15 to 24 (LAAQLAQSSQ). Residues 25–42 (KAGNAQSGHDTKNVTKQG) show a composition bias toward polar residues. Basic and acidic residues predominate over residues 77-86 (SKGEKSEKSG). A compositionally biased stretch (low complexity) spans 88 to 103 (SKSSTSVASASETATA). Polar residues predominate over residues 113-124 (RQNNYDSPSLPT).

It belongs to the chlamydial CPn_0808/CT_579/TC_0868 family.

The chain is Protein CPn_0808/CP_1063/CPj0808/CpB0837 from Chlamydia pneumoniae (Chlamydophila pneumoniae).